The chain runs to 655 residues: Tetratricopeptide repeat protein 30 homolog (655 aa).

TPR repeat units lie at residues 10–43 (EGHV…ANTR), 44–76 (AGLS…APKE), 143–176 (ADTL…GGFN), 178–210 (LVAY…GMRN), 385–418 (LAAK…YLPV), 450–484 (SIWR…HSDD), and 534–567 (CIVN…GSGN).

The protein belongs to the TTC30/dfy-1/fleer family.

The protein resides in the cell projection. The protein localises to the cilium. Required for polyglutamylation of axonemal tubulin in sensory cilia. Plays a role in anterograde intraflagellar transport (IFT), the process by which cilia precursors are transported from the base of the cilium to the site of their incorporation at the tip. This is Tetratricopeptide repeat protein 30 homolog from Drosophila melanogaster (Fruit fly).